A 165-amino-acid chain; its full sequence is Chorismate pyruvate-lyase (165 aa).

The substrate site is built by methionine 35, arginine 77, leucine 115, and glutamate 156.

It belongs to the UbiC family. Monomer.

It is found in the cytoplasm. The catalysed reaction is chorismate = 4-hydroxybenzoate + pyruvate. It functions in the pathway cofactor biosynthesis; ubiquinone biosynthesis. Removes the pyruvyl group from chorismate, with concomitant aromatization of the ring, to provide 4-hydroxybenzoate (4HB) for the ubiquinone pathway. The sequence is that of Chorismate pyruvate-lyase from Salmonella agona (strain SL483).